A 187-amino-acid chain; its full sequence is Elongation factor P (187 aa).

Belongs to the elongation factor P family.

It is found in the cytoplasm. It functions in the pathway protein biosynthesis; polypeptide chain elongation. Functionally, involved in peptide bond synthesis. Stimulates efficient translation and peptide-bond synthesis on native or reconstituted 70S ribosomes in vitro. Probably functions indirectly by altering the affinity of the ribosome for aminoacyl-tRNA, thus increasing their reactivity as acceptors for peptidyl transferase. This is Elongation factor P from Frankia casuarinae (strain DSM 45818 / CECT 9043 / HFP020203 / CcI3).